Reading from the N-terminus, the 147-residue chain is Large ribosomal subunit protein uL16 (147 aa).

The protein belongs to the universal ribosomal protein uL16 family. In terms of assembly, part of the 50S ribosomal subunit.

In terms of biological role, binds 23S rRNA and is also seen to make contacts with the A and possibly P site tRNAs. This chain is Large ribosomal subunit protein uL16, found in Clostridium botulinum (strain ATCC 19397 / Type A).